A 1460-amino-acid polypeptide reads, in one-letter code: DNA-directed RNA polymerase III subunit RPC1 (1460 aa).

Zn(2+) contacts are provided by C67, C70, C77, H80, C107, C110, and C154. D511, D513, and D515 together coordinate Mg(2+). Positions 858-870 are bridging helix; the sequence is PPEFLFHAISGRE.

The protein belongs to the RNA polymerase beta' chain family. As to quaternary structure, component of the RNA polymerase III (Pol III) complex consisting of 17 subunits.

The protein localises to the nucleus. It carries out the reaction RNA(n) + a ribonucleoside 5'-triphosphate = RNA(n+1) + diphosphate. DNA-dependent RNA polymerase catalyzes the transcription of DNA into RNA using the four ribonucleoside triphosphates as substrates. Largest and catalytic core component of RNA polymerase III which synthesizes small RNAs, such as 5S rRNA and tRNAs. Forms the polymerase active center together with the second largest subunit. A single-stranded DNA template strand of the promoter is positioned within the central active site cleft of Pol III. A bridging helix emanates from RPC1 and crosses the cleft near the catalytic site and is thought to promote translocation of Pol III by acting as a ratchet that moves the RNA-DNA hybrid through the active site by switching from straight to bent conformations at each step of nucleotide addition. The polypeptide is DNA-directed RNA polymerase III subunit RPC1 (RPO31) (Saccharomyces cerevisiae (strain ATCC 204508 / S288c) (Baker's yeast)).